Here is a 1486-residue protein sequence, read N- to C-terminus: Chromosome partition protein MukB (1486 aa).

34–41 (GGNGAGKS) serves as a coordination point for ATP. Coiled coils occupy residues 326–418 (LEAD…QYNQ), 444–480 (LETF…QAYQ), and 509–603 (RHLA…RAPV). Residues 666–783 (PGGSEDQRLN…EVPLFGRAAR (118 aa)) are flexible hinge. Coiled coils occupy residues 835 to 923 (EAEI…AKLE), 977 to 1115 (EMLS…TAKA), and 1209 to 1266 (VEAI…QNVS).

It belongs to the SMC family. MukB subfamily. Homodimerization via its hinge domain. Binds to DNA via its C-terminal region. Interacts, and probably forms a ternary complex, with MukE and MukF via its C-terminal region. The complex formation is stimulated by calcium or magnesium. Interacts with tubulin-related protein FtsZ.

The protein resides in the cytoplasm. It localises to the nucleoid. Functionally, plays a central role in chromosome condensation, segregation and cell cycle progression. Functions as a homodimer, which is essential for chromosome partition. Involved in negative DNA supercoiling in vivo, and by this means organize and compact chromosomes. May achieve or facilitate chromosome segregation by condensation DNA from both sides of a centrally located replisome during cell division. The protein is Chromosome partition protein MukB of Escherichia coli O6:K15:H31 (strain 536 / UPEC).